Consider the following 1055-residue polypeptide: Leukotoxin (1055 aa).

Residues 11-49 adopt a coiled-coil conformation; that stretch reads QQAAQFANSVADRAKENIDAAKEQLQKALDKLGKTGKKL. Cholesterol recognition/amino acid consensus (CRAC) region stretches follow at residues 334–340 and 502–506; these read LEEYSKR and VDYLK. Hemolysin-type calcium-binding repeat units follow at residues 721 to 738, 739 to 756, 757 to 774, 775 to 792, 793 to 810, 811 to 828, and 829 to 846; these read IGSTLRDKFYGSKFNDVF, HGHDGDDLIYGYDGDDRL, YGDNGNDEIHGGQGNDKL, YGGAGNDRLFGEYGNNYL, DGGEGDDHLEGGNGSDIL, RGGSGNDKLFGNQGDDLL, and DGGEGDDQLAGGEGNDIY. The segment at 795 to 815 is disordered; it reads GEGDDHLEGGNGSDILRGGSG. Residues 990–1009 are disordered; it reads KGKSSSLMSSSRSSSMLTQK. Low complexity predominate over residues 993–1006; that stretch reads SSSLMSSSRSSSML.

This sequence belongs to the RTX prokaryotic toxin (TC 1.C.11) family. Interacts specifically with the superoxide dismutase [Cu-Zn]. This interaction may protect LtxA from reactive oxygen species and reactive nitrogen species produced by host inflammatory cells during disease. Interacts with the human leukocyte adhesion glycoprotein LFA-1 (ITGAL-ITGB2). Post-translationally, acylated at Lys-562 and Lys-687 by LtxC. This modification is required for full activity. Isolated methyl esters contain palmitoyl and palmitolyl fatty acyl groups with smaller quantities of myristic and stearic fatty acids.

It is found in the cell outer membrane. Its subcellular location is the secreted. In terms of biological role, virulence factor that plays an important role in immune evasion. Lyses human lymphocytes and monocytes. Binds to the LFA-1 integrin on the surface of the host cell and to cholesterol-containing membranes, which probably results in large LtxA-LFA-1 clusters in lipid rafts. Also shows beta-hemolytic activity on certain types of growth media. The sequence is that of Leukotoxin from Aggregatibacter actinomycetemcomitans (Actinobacillus actinomycetemcomitans).